A 391-amino-acid polypeptide reads, in one-letter code: N-acetylaspartylglutamate synthase A (391 aa).

An ATP-grasp domain is found at 115-300 (FQELAGHGVP…VGGIIADYTM (186 aa)). ATP is bound by residues lysine 154, 189-199 (QKYVKESHGKD), and arginine 215. Mg(2+)-binding residues include aspartate 260, glutamate 273, and asparagine 275. Residues aspartate 260, glutamate 273, and asparagine 275 each coordinate Mn(2+). Serine 319 bears the Phosphoserine mark. Polar residues predominate over residues 341-350 (TINSGSTSSE). The interval 341 to 379 (TINSGSTSSESEPELGEIRDSSASTMGAPPSMLPEPGYN) is disordered.

Belongs to the RimK family. Mg(2+) serves as cofactor. The cofactor is Mn(2+).

Its subcellular location is the cytoplasm. It carries out the reaction N-acetyl-L-aspartate + L-glutamate + ATP = N-acetyl-L-aspartyl-L-glutamate + ADP + phosphate + H(+). The catalysed reaction is N-acetyl-L-aspartate + 2 L-glutamate + 2 ATP = N-acetyl-L-aspartyl-L-glutamyl-L-glutamate + 2 ADP + 2 phosphate + 2 H(+). Functionally, catalyzes the synthesis of N-acetyl-L-aspartyl-L-glutamate (NAAG) and N-acetyl-L-aspartyl-L-glutamyl-L-glutamate. The protein is N-acetylaspartylglutamate synthase A (RIMKLA) of Homo sapiens (Human).